The sequence spans 249 residues: Aspartate/glutamate leucyltransferase (249 aa).

The protein belongs to the R-transferase family. Bpt subfamily.

The protein localises to the cytoplasm. The catalysed reaction is N-terminal L-glutamyl-[protein] + L-leucyl-tRNA(Leu) = N-terminal L-leucyl-L-glutamyl-[protein] + tRNA(Leu) + H(+). It carries out the reaction N-terminal L-aspartyl-[protein] + L-leucyl-tRNA(Leu) = N-terminal L-leucyl-L-aspartyl-[protein] + tRNA(Leu) + H(+). In terms of biological role, functions in the N-end rule pathway of protein degradation where it conjugates Leu from its aminoacyl-tRNA to the N-termini of proteins containing an N-terminal aspartate or glutamate. The chain is Aspartate/glutamate leucyltransferase from Xanthobacter autotrophicus (strain ATCC BAA-1158 / Py2).